The sequence spans 226 residues: MGIRAIVVDTAGTTTDLNFIQDVLFPYSVKALPDFLEQNQHNVLVENCICDTRDIALEPDADLARVTEILQQWVSEDRKATPLKTLQGLIWKQGYAHGEFKGHIFPDFIEAVKRFSEQNLRIYSFSSGSVDAQKLLFSHSDGGDLTEMFNGHFDTRTGNKLDKQAYCNILNTISLSPKQVLFVSDVIEELKAADAAGMMTCQMVRDSKQRTGEFRTISSFDELLIE.

The protein belongs to the HAD-like hydrolase superfamily. MasA/MtnC family. Monomer. Mg(2+) serves as cofactor.

It carries out the reaction 5-methylsulfanyl-2,3-dioxopentyl phosphate + H2O = 1,2-dihydroxy-5-(methylsulfanyl)pent-1-en-3-one + phosphate. It functions in the pathway amino-acid biosynthesis; L-methionine biosynthesis via salvage pathway; L-methionine from S-methyl-5-thio-alpha-D-ribose 1-phosphate: step 3/6. The protein operates within amino-acid biosynthesis; L-methionine biosynthesis via salvage pathway; L-methionine from S-methyl-5-thio-alpha-D-ribose 1-phosphate: step 4/6. In terms of biological role, bifunctional enzyme that catalyzes the enolization of 2,3-diketo-5-methylthiopentyl-1-phosphate (DK-MTP-1-P) into the intermediate 2-hydroxy-3-keto-5-methylthiopentenyl-1-phosphate (HK-MTPenyl-1-P), which is then dephosphorylated to form the acireductone 1,2-dihydroxy-3-keto-5-methylthiopentene (DHK-MTPene). This Shewanella baltica (strain OS195) protein is Enolase-phosphatase E1.